Consider the following 369-residue polypeptide: Ubiquinone biosynthesis O-methyltransferase, mitochondrial (369 aa).

Residues 1–85 constitute a mitochondrion transit peptide; the sequence is MWSGRKLGSS…SFRYPWARLY (85 aa). An S-adenosyl-L-methionine-binding site is contributed by R124. N6-acetyllysine is present on residues K143 and K149. 2 residues coordinate S-adenosyl-L-methionine: G154 and D175. K196 carries the N6-acetyllysine modification. S222 serves as a coordination point for S-adenosyl-L-methionine. Residues E223, E226, and H227 each coordinate Mg(2+).

Belongs to the class I-like SAM-binding methyltransferase superfamily. UbiG/COQ3 family. In terms of assembly, component of a multi-subunit COQ enzyme complex, composed of at least COQ3, COQ4, COQ5, COQ6, COQ7 and COQ9. Requires Mg(2+) as cofactor.

It localises to the mitochondrion inner membrane. The catalysed reaction is 3,4-dihydroxy-5-(all-trans-decaprenyl)benzoate + S-adenosyl-L-methionine = 4-hydroxy-3-methoxy-5-(all-trans-decaprenyl)benzoate + S-adenosyl-L-homocysteine + H(+). The enzyme catalyses a 3-demethylubiquinone + S-adenosyl-L-methionine = a ubiquinone + S-adenosyl-L-homocysteine. It catalyses the reaction 3-demethylubiquinol-10 + S-adenosyl-L-methionine = ubiquinol-10 + S-adenosyl-L-homocysteine + H(+). It functions in the pathway cofactor biosynthesis; ubiquinone biosynthesis. Functionally, O-methyltransferase required for two non-consecutive steps during ubiquinone biosynthesis. Catalyzes the 2 O-methylation of 3,4-dihydroxy-5-(all-trans-decaprenyl)benzoic acid into 4-hydroxy-3-methoxy-5-(all-trans-decaprenyl)benzoic acid. Also catalyzes the last step of ubiquinone biosynthesis by mediating methylation of 3-demethylubiquinone into ubiquinone. Also able to mediate the methylation of 3-demethylubiquinol-10 into ubiquinol-10. In Homo sapiens (Human), this protein is Ubiquinone biosynthesis O-methyltransferase, mitochondrial.